The chain runs to 184 residues: Large ribosomal subunit protein eL14 (184 aa).

The interval 149 to 184 is disordered; that stretch reads KNAKKVDSTPAAKKRIEKARAARKAKPTAAKEKSKK. Basic residues predominate over residues 160 to 174; that stretch reads AKKRIEKARAARKAK.

This sequence belongs to the eukaryotic ribosomal protein eL14 family.

The sequence is that of Large ribosomal subunit protein eL14 from Trypanosoma congolense.